The primary structure comprises 159 residues: Large ribosomal subunit protein uL30 (159 aa).

Belongs to the universal ribosomal protein uL30 family. In terms of assembly, part of the 50S ribosomal subunit.

This is Large ribosomal subunit protein uL30 from Aeropyrum pernix (strain ATCC 700893 / DSM 11879 / JCM 9820 / NBRC 100138 / K1).